Reading from the N-terminus, the 452-residue chain is 1,3-beta-glucanosyltransferase gel1 (452 aa).

The N-terminal stretch at 1–19 (MKASAVTAALAVGASTVLA) is a signal peptide. C71 and C100 form a disulfide bridge. (1,3-beta-D-glucosyl)n contacts are provided by Y89, N159, E160, D201, and R206. E160 functions as the Proton donor in the catalytic mechanism. Cystine bridges form between C215-C345 and C233-C264. An N-linked (GlcNAc...) asparagine glycan is attached at N249. The Nucleophile role is filled by E261. Y292 is a binding site for (1,3-beta-D-glucosyl)n. Polar residues predominate over residues 325-340 (EKTSNPSGDGNYNKTG). The disordered stretch occupies residues 325–419 (EKTSNPSGDG…SGTSTSSKGA (95 aa)). An N-linked (GlcNAc...) asparagine glycan is attached at N337. Over residues 393–419 (STATAEPGSGSATGSSSSGTSTSSKGA) the composition is skewed to low complexity. A419 carries GPI-like-anchor amidated alanine lipidation. The propeptide at 420–452 (AAGLTVPSLTMAPVVVGAVTLLSTVFGAGLVLL) is removed in mature form.

The protein belongs to the glycosyl hydrolase 72 family. Post-translationally, the GPI-like anchor contains a phosphoceramide lipid group. The anchor position has not been determined.

It localises to the cell membrane. In terms of biological role, splits internally a 1,3-beta-glucan molecule and transfers the newly generated reducing end (the donor) to the non-reducing end of another 1,3-beta-glucan molecule (the acceptor) forming a 1,3-beta linkage, resulting in the elongation of 1,3-beta-glucan chains in the cell wall. Involved in cell wall morphogenesis. The sequence is that of 1,3-beta-glucanosyltransferase gel1 (gel1) from Aspergillus fumigatus (strain CBS 144.89 / FGSC A1163 / CEA10) (Neosartorya fumigata).